A 301-amino-acid chain; its full sequence is ATP synthase gamma chain (301 aa).

It belongs to the ATPase gamma chain family. In terms of assembly, F-type ATPases have 2 components, CF(1) - the catalytic core - and CF(0) - the membrane proton channel. CF(1) has five subunits: alpha(3), beta(3), gamma(1), delta(1), epsilon(1). CF(0) has three main subunits: a, b and c.

The protein localises to the cell inner membrane. Functionally, produces ATP from ADP in the presence of a proton gradient across the membrane. The gamma chain is believed to be important in regulating ATPase activity and the flow of protons through the CF(0) complex. The chain is ATP synthase gamma chain from Helicobacter pylori (strain J99 / ATCC 700824) (Campylobacter pylori J99).